Here is a 141-residue protein sequence, read N- to C-terminus: Large ribosomal subunit protein bL17 (141 aa).

Residues 120–141 are disordered; it reads TSAKGQDSGPVLTADEDEFEAA.

This sequence belongs to the bacterial ribosomal protein bL17 family. Part of the 50S ribosomal subunit. Contacts protein L32.

The sequence is that of Large ribosomal subunit protein bL17 from Novosphingobium aromaticivorans (strain ATCC 700278 / DSM 12444 / CCUG 56034 / CIP 105152 / NBRC 16084 / F199).